The following is a 179-amino-acid chain: Large ribosomal subunit protein uL5 (179 aa).

The protein belongs to the universal ribosomal protein uL5 family. Part of the 50S ribosomal subunit; part of the 5S rRNA/L5/L18/L25 subcomplex. Contacts the 5S rRNA and the P site tRNA. Forms a bridge to the 30S subunit in the 70S ribosome.

Functionally, this is one of the proteins that bind and probably mediate the attachment of the 5S RNA into the large ribosomal subunit, where it forms part of the central protuberance. In the 70S ribosome it contacts protein S13 of the 30S subunit (bridge B1b), connecting the 2 subunits; this bridge is implicated in subunit movement. Contacts the P site tRNA; the 5S rRNA and some of its associated proteins might help stabilize positioning of ribosome-bound tRNAs. This chain is Large ribosomal subunit protein uL5, found in Pseudomonas fluorescens (strain ATCC BAA-477 / NRRL B-23932 / Pf-5).